A 792-amino-acid chain; its full sequence is LPS-assembly protein LptD (792 aa).

Residues methionine 1–alanine 22 form the signal peptide.

It belongs to the LptD family. As to quaternary structure, component of the lipopolysaccharide transport and assembly complex. Interacts with LptE and LptA.

The protein localises to the cell outer membrane. In terms of biological role, together with LptE, is involved in the assembly of lipopolysaccharide (LPS) at the surface of the outer membrane. The sequence is that of LPS-assembly protein LptD from Xylella fastidiosa (strain Temecula1 / ATCC 700964).